A 372-amino-acid polypeptide reads, in one-letter code: Aminomethyltransferase (372 aa).

The protein belongs to the GcvT family. In terms of assembly, the glycine cleavage system is composed of four proteins: P, T, L and H.

It carries out the reaction N(6)-[(R)-S(8)-aminomethyldihydrolipoyl]-L-lysyl-[protein] + (6S)-5,6,7,8-tetrahydrofolate = N(6)-[(R)-dihydrolipoyl]-L-lysyl-[protein] + (6R)-5,10-methylene-5,6,7,8-tetrahydrofolate + NH4(+). Its function is as follows. The glycine cleavage system catalyzes the degradation of glycine. This is Aminomethyltransferase from Rubrobacter xylanophilus (strain DSM 9941 / JCM 11954 / NBRC 16129 / PRD-1).